The primary structure comprises 299 residues: dTDP-4-dehydrorhamnose reductase (299 aa).

NADH is bound by residues 10 to 12 (GQV), D30, 39 to 40 (DF), and 63 to 65 (AHT). Residue 11–12 (QV) coordinates NADPH. Residues 39–40 (DF), 63–65 (AHT), and Y102 contribute to the NADPH site. 104–105 (TD) contributes to the dTDP-beta-L-rhamnose binding site. NADH-binding residues include Y128 and K132. NADPH is bound by residues Y128 and K132. Y128 functions as the Proton donor/acceptor in the catalytic mechanism. W153 is a binding site for dTDP-beta-L-rhamnose.

It belongs to the dTDP-4-dehydrorhamnose reductase family. Homodimer. It depends on Mg(2+) as a cofactor.

It carries out the reaction dTDP-beta-L-rhamnose + NADP(+) = dTDP-4-dehydro-beta-L-rhamnose + NADPH + H(+). The protein operates within carbohydrate biosynthesis; dTDP-L-rhamnose biosynthesis. Its pathway is bacterial outer membrane biogenesis; LPS O-antigen biosynthesis. Its function is as follows. Involved in the biosynthesis of the dTDP-L-rhamnose which is an important component of lipopolysaccharide (LPS). Catalyzes the reduction of dTDP-6-deoxy-L-lyxo-4-hexulose to yield dTDP-L-rhamnose. RmlD uses NADH and NADPH nearly equally well. The sequence is that of dTDP-4-dehydrorhamnose reductase from Escherichia coli (strain K12).